The primary structure comprises 265 residues: 2-C-methyl-D-erythritol 4-phosphate cytidylyltransferase (265 aa).

Residues 231 to 241 are compositionally biased toward basic and acidic residues; the sequence is DRGGASREAER. The segment at 231–265 is disordered; the sequence is DRGGASREAERSAMPSAATSVFSGARSAASGSEEV. A compositionally biased stretch (low complexity) spans 253 to 265; the sequence is SGARSAASGSEEV.

Belongs to the IspD/TarI cytidylyltransferase family. IspD subfamily.

It carries out the reaction 2-C-methyl-D-erythritol 4-phosphate + CTP + H(+) = 4-CDP-2-C-methyl-D-erythritol + diphosphate. It functions in the pathway isoprenoid biosynthesis; isopentenyl diphosphate biosynthesis via DXP pathway; isopentenyl diphosphate from 1-deoxy-D-xylulose 5-phosphate: step 2/6. Catalyzes the formation of 4-diphosphocytidyl-2-C-methyl-D-erythritol from CTP and 2-C-methyl-D-erythritol 4-phosphate (MEP). This Xanthomonas campestris pv. campestris (strain 8004) protein is 2-C-methyl-D-erythritol 4-phosphate cytidylyltransferase.